The primary structure comprises 91 residues: Acyl carrier protein AsbD (91 aa).

The Carrier domain maps to 4–82; sequence EALKNAVLKI…SLLDFMEELQ (79 aa). Ser-40 bears the O-(pantetheine 4'-phosphoryl)serine mark.

Belongs to the acyl carrier protein (ACP) family. Activated by the transfer of a 4'-phosphopantetheine group from CoA to Ser-40.

It participates in siderophore biosynthesis; petrobactin biosynthesis. Involved in the biosynthesis of petrobactin, a catecholate siderophore that functions in both iron acquisition and virulence. Aryl-carrier protein that activates 3,4-dihydroxybenzoate (3,4-DHBA) prior to its incorporation into petrobactin. This is Acyl carrier protein AsbD from Bacillus anthracis.